The chain runs to 677 residues: Amine oxidase [copper-containing] alpha 2, peroxisomal (677 aa).

Residue 320-331 participates in substrate binding; it reads YLDCGEFGCGQT. Residue Asp-322 is the Proton acceptor of the active site. A disulfide bond links Cys-341 and Cys-367. Residue 407-412 participates in substrate binding; that stretch reads VGNYDY. Catalysis depends on Tyr-410, which acts as the Schiff-base intermediate with substrate; via topaquinone. The residue at position 410 (Tyr-410) is a 2',4',5'-topaquinone. The Cu cation site is built by His-466 and His-468. Mn(2+) contacts are provided by Asp-477, Asp-617, and Ile-618. His-628 is a binding site for Cu cation.

It belongs to the copper/topaquinone oxidase family. Homodimer. Cu cation serves as cofactor. The cofactor is Zn(2+). L-topaquinone is required as a cofactor. In terms of processing, topaquinone (TPQ) is generated by copper-dependent autoxidation of a specific tyrosyl residue. In terms of tissue distribution, expressed exclusively in leaves.

The protein resides in the peroxisome. It carries out the reaction a primary methyl amine + O2 + H2O = an aldehyde + H2O2 + NH4(+). It participates in amine and polyamine degradation; putrescine degradation. In terms of biological role, copper amine oxidase that can use putrescine and spermidine as substrates. Involved in putrescine catabolism in peroxisomes in response to salt stress. Regulates arginine-dependent nitric oxide (NO) production, a key signaling molecule regulating a wide range of physiological processes including responses to salt stress, by influencing arginine bioavailability. Modulates primary root growth. This is Amine oxidase [copper-containing] alpha 2, peroxisomal from Arabidopsis thaliana (Mouse-ear cress).